The sequence spans 93 residues: Phosphoribosyl-ATP pyrophosphatase (93 aa).

It belongs to the PRA-PH family.

The protein resides in the cytoplasm. It catalyses the reaction 1-(5-phospho-beta-D-ribosyl)-ATP + H2O = 1-(5-phospho-beta-D-ribosyl)-5'-AMP + diphosphate + H(+). Its pathway is amino-acid biosynthesis; L-histidine biosynthesis; L-histidine from 5-phospho-alpha-D-ribose 1-diphosphate: step 2/9. In Metallosphaera sedula (strain ATCC 51363 / DSM 5348 / JCM 9185 / NBRC 15509 / TH2), this protein is Phosphoribosyl-ATP pyrophosphatase.